The chain runs to 473 residues: Lactate utilization protein B (473 aa).

4Fe-4S ferredoxin-type domains follow at residues 303–333 (GTAF…GHSY) and 352–381 (YDDY…LHEL). Cys312, Cys315, Cys318, Cys322, Cys365, Cys368, and Cys372 together coordinate [4Fe-4S] cluster.

It belongs to the LutB/YkgF family.

Its function is as follows. Is involved in L-lactate degradation and allows cells to grow with lactate as the sole carbon source. Has probably a role as an electron transporter during oxidation of L-lactate. In Bacillus pumilus (strain SAFR-032), this protein is Lactate utilization protein B.